The chain runs to 288 residues: ATP synthase gamma chain (288 aa).

It belongs to the ATPase gamma chain family. As to quaternary structure, F-type ATPases have 2 components, CF(1) - the catalytic core - and CF(0) - the membrane proton channel. CF(1) has five subunits: alpha(3), beta(3), gamma(1), delta(1), epsilon(1). CF(0) has three main subunits: a, b and c.

It localises to the cell membrane. Produces ATP from ADP in the presence of a proton gradient across the membrane. The gamma chain is believed to be important in regulating ATPase activity and the flow of protons through the CF(0) complex. This chain is ATP synthase gamma chain, found in Bacillus pumilus (strain SAFR-032).